Here is a 153-residue protein sequence, read N- to C-terminus: Histone H2B.4 (153 aa).

2 stretches are compositionally biased toward basic and acidic residues: residues 1 to 10 (MAPKKDEKPA) and 20 to 54 (AKAEAKPKAEKAAKKAKKEPSKKAAKEPKGDGEKK). Positions 1–60 (MAPKKDEKPATAEAGAEAPAKAEAKPKAEKAAKKAKKEPSKKAAKEPKGDGEKKDKKKKK) are disordered. N6-acetyllysine occurs at positions 41 and 42. A Glycyl lysine isopeptide (Lys-Gly) (interchain with G-Cter in ubiquitin) cross-link involves residue lysine 149.

This sequence belongs to the histone H2B family. The nucleosome is a histone octamer containing two molecules each of H2A, H2B, H3 and H4 assembled in one H3-H4 heterotetramer and two H2A-H2B heterodimers. The octamer wraps approximately 147 bp of DNA. The N-terminus is blocked. Post-translationally, can be acetylated to form H2BK33ac and H2BK34ac. Acetylated mainly on the ubiquitinated form. In terms of processing, monoubiquitinated to form H2BK143ub1; which is increased during the light period and may give a specific tag for epigenetic transcriptional activation.

It localises to the nucleus. It is found in the chromosome. In terms of biological role, core component of nucleosome. Nucleosomes wrap and compact DNA into chromatin, limiting DNA accessibility to the cellular machineries which require DNA as a template. Histones thereby play a central role in transcription regulation, DNA repair, DNA replication and chromosomal stability. DNA accessibility is regulated via a complex set of post-translational modifications of histones, also called histone code, and nucleosome remodeling. This is Histone H2B.4 from Chlamydomonas reinhardtii (Chlamydomonas smithii).